A 242-amino-acid polypeptide reads, in one-letter code: MTSNLIYPYPTLIPGVLRQRYKRFFADIELASGEIITAHCPNTGPMTGVCTIGSPVYISPSDNPKRKLAYTWEMIQVNNTWVGINTAIPNKVIKYALENQWFAQLKERYTTVRSEVPYGKDNKSRVDFLLTQNEGKSPIYVEVKNTTLCQGEIALFPDTVTSRGQKHLRELMALLPDTKPIMLYFINRGDCYSFAPGDEFDPTYGTLLREAVKKGLEVLPCRFEVTPEGIHYLGLAEFLTKL.

Belongs to the SfsA family.

The chain is Sugar fermentation stimulation protein homolog from Rippkaea orientalis (strain PCC 8801 / RF-1) (Cyanothece sp. (strain PCC 8801)).